Reading from the N-terminus, the 356-residue chain is Peptide chain release factor 1 (356 aa).

Gln233 carries the N5-methylglutamine modification.

It belongs to the prokaryotic/mitochondrial release factor family. In terms of processing, methylated by PrmC. Methylation increases the termination efficiency of RF1.

It localises to the cytoplasm. In terms of biological role, peptide chain release factor 1 directs the termination of translation in response to the peptide chain termination codons UAG and UAA. This chain is Peptide chain release factor 1, found in Bacillus licheniformis (strain ATCC 14580 / DSM 13 / JCM 2505 / CCUG 7422 / NBRC 12200 / NCIMB 9375 / NCTC 10341 / NRRL NRS-1264 / Gibson 46).